The primary structure comprises 100 residues: Colipase-like protein 2 (100 aa).

Residues Met-1–Ser-21 form the signal peptide. Disulfide bonds link Cys-34–Cys-45, Cys-40–Cys-56, Cys-44–Cys-78, Cys-66–Cys-86, and Cys-80–Cys-97.

The protein belongs to the colipase family.

Its subcellular location is the secreted. This Homo sapiens (Human) protein is Colipase-like protein 2 (CLPSL2).